Here is a 147-residue protein sequence, read N- to C-terminus: Hemoglobin subunit gamma (147 aa).

Residues 3 to 147 (HFTAEEKAAI…VANALAYKYH (145 aa)) form the Globin domain. Positions 64 and 93 each coordinate heme b.

The protein belongs to the globin family. As to quaternary structure, heterotetramer of two alpha chains and two gamma chains in fetal hemoglobin (Hb F). As to expression, red blood cells.

In terms of biological role, gamma chains make up the fetal hemoglobin F, in combination with alpha chains. This Elephas maximus (Indian elephant) protein is Hemoglobin subunit gamma (HBG).